A 205-amino-acid polypeptide reads, in one-letter code: Thymidylate kinase (205 aa).

An ATP-binding site is contributed by 10–17; it reads GTEGVGKS.

The protein belongs to the thymidylate kinase family.

The catalysed reaction is dTMP + ATP = dTDP + ADP. Functionally, phosphorylation of dTMP to form dTDP in both de novo and salvage pathways of dTTP synthesis. This chain is Thymidylate kinase, found in Teredinibacter turnerae (strain ATCC 39867 / T7901).